Here is a 438-residue protein sequence, read N- to C-terminus: Adenosylhomocysteinase (438 aa).

Substrate contacts are provided by T64, D139, and E164. Residue 165–167 (TTT) coordinates NAD(+). Residues K194 and D198 each coordinate substrate. Residues N199, 228-233 (GYGDVG), E251, N286, 307-309 (IGH), and N352 each bind NAD(+).

It belongs to the adenosylhomocysteinase family. NAD(+) serves as cofactor.

It localises to the cytoplasm. The catalysed reaction is S-adenosyl-L-homocysteine + H2O = L-homocysteine + adenosine. The protein operates within amino-acid biosynthesis; L-homocysteine biosynthesis; L-homocysteine from S-adenosyl-L-homocysteine: step 1/1. In terms of biological role, may play a key role in the regulation of the intracellular concentration of adenosylhomocysteine. The sequence is that of Adenosylhomocysteinase from Coxiella burnetii (strain RSA 493 / Nine Mile phase I).